Consider the following 113-residue polypeptide: uncharacterized protein (113 aa).

The SWIM-type zinc finger occupies 49 to 91 (FFVVVGKEEYVVEGGFCTCPDFLVNLKGKSPCAHIIAVEVAKI).

This is an uncharacterized protein from Archaeoglobus fulgidus (strain ATCC 49558 / DSM 4304 / JCM 9628 / NBRC 100126 / VC-16).